A 473-amino-acid chain; its full sequence is Ornithine aminotransferase, mitochondrial (473 aa).

A mitochondrion-targeting transit peptide spans 1-32; the sequence is MAAALARRGGGGLARALARGRGMCSATAAERA. Lysine 293 is subject to N6-(pyridoxal phosphate)lysine.

Belongs to the class-III pyridoxal-phosphate-dependent aminotransferase family. In terms of assembly, homotetramer. Pyridoxal 5'-phosphate serves as cofactor.

Its subcellular location is the mitochondrion matrix. The catalysed reaction is a 2-oxocarboxylate + L-ornithine = L-glutamate 5-semialdehyde + an L-alpha-amino acid. Its pathway is amino-acid biosynthesis; L-proline biosynthesis; L-glutamate 5-semialdehyde from L-ornithine: step 1/1. In terms of biological role, confers drought and oxidative stress tolerance mainly through enhancing ROS-scavenging capacity and Pro pre-accumulation. This chain is Ornithine aminotransferase, mitochondrial (OAT), found in Oryza sativa subsp. japonica (Rice).